Here is a 501-residue protein sequence, read N- to C-terminus: Phosphoethanolamine N-methyltransferase 1 (501 aa).

The S-adenosyl-L-homocysteine site is built by Gly-72, Arg-77, Asp-93, Asp-118, Val-119, and Asn-137. 5 residues coordinate phosphocholine: Ser-170, Thr-175, Gly-176, Arg-180, and Tyr-187. N-methylethanolamine phosphate is bound by residues 256–257 (QY) and Tyr-265. Tyr-265 serves as a coordination point for phosphocholine. The S-adenosyl-L-homocysteine site is built by Val-274, Ser-275, Gly-301, Asp-323, Asp-349, Cys-350, and Arg-366. Positions 397, 411, 415, 417, and 483 each coordinate phosphocholine. N-methylethanolamine phosphate contacts are provided by residues Tyr-397, Tyr-411, 415-417 (RGY), and Lys-483.

The protein belongs to the class I-like SAM-binding methyltransferase superfamily. PEAMT family.

It catalyses the reaction phosphoethanolamine + S-adenosyl-L-methionine = N-methylethanolamine phosphate + S-adenosyl-L-homocysteine + H(+). The catalysed reaction is N-methylethanolamine phosphate + S-adenosyl-L-methionine = N,N-dimethylethanolamine phosphate + S-adenosyl-L-homocysteine + H(+). It carries out the reaction N,N-dimethylethanolamine phosphate + S-adenosyl-L-methionine = phosphocholine + S-adenosyl-L-homocysteine + H(+). Its pathway is phospholipid metabolism; phosphatidylcholine biosynthesis; phosphocholine from phosphoethanolamine: step 1/1. Its function is as follows. Involved in phosphocholine biosynthesis. Catalyzes the N-methylation of phosphoethanolamine, phosphomonomethylethanolamine and phosphodimethylethanolamine, the three methylation steps required to convert phosphoethanolamine to phosphocholine (PC). May be involved in root development. The chain is Phosphoethanolamine N-methyltransferase 1 from Zea mays (Maize).